The primary structure comprises 376 residues: Galactoside alpha-(1,2)-fucosyltransferase 1 (376 aa).

At 1–12 (MWTPSRKQLCLA) the chain is on the cytoplasmic side. Residues 13-29 (FLSVCVLSAGSFFFHLN) traverse the membrane as a helical; Signal-anchor for type II membrane protein segment. Over 30-376 (GGNFFQNALT…WETDSLFRLA (347 aa)) the chain is Lumenal. 3 N-linked (GlcNAc...) asparagine glycosylation sites follow: asparagine 64, asparagine 302, and asparagine 328.

It belongs to the glycosyltransferase 11 family.

The protein localises to the golgi apparatus. It is found in the golgi stack membrane. It carries out the reaction a beta-D-galactosyl-(1-&gt;4)-N-acetyl-beta-D-glucosaminyl derivative + GDP-beta-L-fucose = an alpha-L-Fuc-(1-&gt;2)-beta-D-Gal-(1-&gt;4)-beta-D-GlcNAc derivative + GDP + H(+). It catalyses the reaction a ganglioside GA1 + GDP-beta-L-fucose = a ganglioside Fuc-GA1 + GDP + H(+). The enzyme catalyses a beta-D-Gal-(1-&gt;3)-beta-D-GlcNAc-(1-&gt;3)-beta-D-Gal-(1-&gt;4)-beta-D-Glc-(1&lt;-&gt;1')-Cer(d18:1(4E)) + GDP-beta-L-fucose = alpha-L-fucosyl-(1-&gt;2)- beta-D-galactosyl-(1-&gt;3)-N-acetyl-beta-D-glucosaminyl-(1-&gt;3)-beta-D-galactosyl-(1-&gt;4)-beta-D-glucosyl-(1&lt;-&gt;1')-N-acylsphing-4-enine + GDP + H(+). The catalysed reaction is a neolactoside nLc4Cer(d18:1(4E)) + GDP-beta-L-fucose = a neolactoside IV(2)-alpha-Fuc-nLc4Cer(d18:1(4E)) + GDP + H(+). It carries out the reaction a ganglioside GM1 + GDP-beta-L-fucose = a ganglioside Fuc-GM1 + GDP + H(+). It catalyses the reaction beta-D-galactosyl-(1-&gt;3)-N-acetyl-D-galactosamine + GDP-beta-L-fucose = alpha-L-fucosyl-(1-&gt;2)-beta-D-galactosyl-(1-&gt;3)-N-acetyl-D-galactosamine + GDP + H(+). It participates in protein modification; protein glycosylation. In terms of biological role, catalyzes the transfer of L-fucose, from a guanosine diphosphate-beta-L-fucose, to the terminal galactose residue of glycoconjugates through an alpha(1,2) linkage leading to H antigen synthesis that is an intermediate substrate in the synthesis of ABO blood group antigens. H antigen is essential for maturation of the glomerular layer of the main olfactory bulb, in cell migration and early cell-cell contacts during tumor associated angiogenesis. Preferentially fucosylates soluble lactose and to a lesser extent fucosylates glycolipids gangliosides GA1 and GM1a. This Rattus norvegicus (Rat) protein is Galactoside alpha-(1,2)-fucosyltransferase 1.